A 109-amino-acid chain; its full sequence is Thiosulfate sulfurtransferase GlpE (109 aa).

A Rhodanese domain is found at 17 to 105; the sequence is KEGKTALVDI…WARSYPQDIT (89 aa). Cys-65 (cysteine persulfide intermediate) is an active-site residue.

The protein belongs to the GlpE family.

The protein resides in the cytoplasm. It catalyses the reaction thiosulfate + hydrogen cyanide = thiocyanate + sulfite + 2 H(+). The catalysed reaction is thiosulfate + [thioredoxin]-dithiol = [thioredoxin]-disulfide + hydrogen sulfide + sulfite + 2 H(+). In terms of biological role, transferase that catalyzes the transfer of sulfur from thiosulfate to thiophilic acceptors such as cyanide or dithiols. May function in a CysM-independent thiosulfate assimilation pathway by catalyzing the conversion of thiosulfate to sulfite, which can then be used for L-cysteine biosynthesis. The chain is Thiosulfate sulfurtransferase GlpE from Yersinia pestis.